A 337-amino-acid polypeptide reads, in one-letter code: Ketol-acid reductoisomerase (NADP(+)) (337 aa).

The region spanning 1–183 is the KARI N-terminal Rossmann domain; it reads MAIETLYDSD…GGARAGVIPT (183 aa). NADP(+) is bound by residues 26–29, Arg-49, Ser-52, Ser-54, and 84–87; these read YGSQ and DTSQ. Residue His-109 is part of the active site. Gly-135 serves as a coordination point for NADP(+). The KARI C-terminal knotted domain maps to 184–329; the sequence is TFKDETETDL…SQLRDLMSWV (146 aa). Mg(2+)-binding residues include Asp-192, Glu-196, Glu-228, and Glu-232. Ser-253 provides a ligand contact to substrate.

The protein belongs to the ketol-acid reductoisomerase family. The cofactor is Mg(2+).

The enzyme catalyses (2R)-2,3-dihydroxy-3-methylbutanoate + NADP(+) = (2S)-2-acetolactate + NADPH + H(+). It catalyses the reaction (2R,3R)-2,3-dihydroxy-3-methylpentanoate + NADP(+) = (S)-2-ethyl-2-hydroxy-3-oxobutanoate + NADPH + H(+). The protein operates within amino-acid biosynthesis; L-isoleucine biosynthesis; L-isoleucine from 2-oxobutanoate: step 2/4. Its pathway is amino-acid biosynthesis; L-valine biosynthesis; L-valine from pyruvate: step 2/4. Its function is as follows. Involved in the biosynthesis of branched-chain amino acids (BCAA). Catalyzes an alkyl-migration followed by a ketol-acid reduction of (S)-2-acetolactate (S2AL) to yield (R)-2,3-dihydroxy-isovalerate. In the isomerase reaction, S2AL is rearranged via a Mg-dependent methyl migration to produce 3-hydroxy-3-methyl-2-ketobutyrate (HMKB). In the reductase reaction, this 2-ketoacid undergoes a metal-dependent reduction by NADPH to yield (R)-2,3-dihydroxy-isovalerate. This chain is Ketol-acid reductoisomerase (NADP(+)), found in Corynebacterium aurimucosum (strain ATCC 700975 / DSM 44827 / CIP 107346 / CN-1) (Corynebacterium nigricans).